The following is a 305-amino-acid chain: Aspartate carbamoyltransferase catalytic subunit (305 aa).

2 residues coordinate carbamoyl phosphate: Arg53 and Thr54. Residue Lys82 participates in L-aspartate binding. Carbamoyl phosphate is bound by residues Arg103, His131, and Gln134. L-aspartate contacts are provided by Arg164 and Arg226. Positions 265 and 266 each coordinate carbamoyl phosphate.

The protein belongs to the aspartate/ornithine carbamoyltransferase superfamily. ATCase family. Heterooligomer of catalytic and regulatory chains.

It catalyses the reaction carbamoyl phosphate + L-aspartate = N-carbamoyl-L-aspartate + phosphate + H(+). Its pathway is pyrimidine metabolism; UMP biosynthesis via de novo pathway; (S)-dihydroorotate from bicarbonate: step 2/3. Its function is as follows. Catalyzes the condensation of carbamoyl phosphate and aspartate to form carbamoyl aspartate and inorganic phosphate, the committed step in the de novo pyrimidine nucleotide biosynthesis pathway. In Ignicoccus hospitalis (strain KIN4/I / DSM 18386 / JCM 14125), this protein is Aspartate carbamoyltransferase catalytic subunit.